Here is a 265-residue protein sequence, read N- to C-terminus: NAD-capped RNA hydrolase NudC (265 aa).

Arginine 76 is a substrate binding site. 4 residues coordinate Zn(2+): cysteine 106, cysteine 109, cysteine 124, and cysteine 127. Residue tyrosine 132 coordinates substrate. A Nudix hydrolase domain is found at 133–256 (PRISPAMMVL…SIAHRLIRHA (124 aa)). The a divalent metal cation site is built by alanine 166, glutamate 182, and glutamate 186. The short motif at 167-188 (GFVEPGETLEECVHRETWEEVG) is the Nudix box element. 200–207 (QSWPFPHS) provides a ligand contact to substrate. Position 227 (glutamate 227) interacts with a divalent metal cation. Position 249 (alanine 249) interacts with substrate.

The protein belongs to the Nudix hydrolase family. NudC subfamily. Homodimer. The cofactor is Mg(2+). Requires Mn(2+) as cofactor. It depends on Zn(2+) as a cofactor.

The catalysed reaction is a 5'-end NAD(+)-phospho-ribonucleoside in mRNA + H2O = a 5'-end phospho-adenosine-phospho-ribonucleoside in mRNA + beta-nicotinamide D-ribonucleotide + 2 H(+). The enzyme catalyses NAD(+) + H2O = beta-nicotinamide D-ribonucleotide + AMP + 2 H(+). It carries out the reaction NADH + H2O = reduced beta-nicotinamide D-ribonucleotide + AMP + 2 H(+). Its function is as follows. mRNA decapping enzyme that specifically removes the nicotinamide adenine dinucleotide (NAD) cap from a subset of mRNAs by hydrolyzing the diphosphate linkage to produce nicotinamide mononucleotide (NMN) and 5' monophosphate mRNA. The NAD-cap is present at the 5'-end of some mRNAs and stabilizes RNA against 5'-processing. Has preference for mRNAs with a 5'-end purine. Catalyzes the hydrolysis of a broad range of dinucleotide pyrophosphates. This is NAD-capped RNA hydrolase NudC from Chromobacterium violaceum (strain ATCC 12472 / DSM 30191 / JCM 1249 / CCUG 213 / NBRC 12614 / NCIMB 9131 / NCTC 9757 / MK).